Consider the following 527-residue polypeptide: Bifunctional methyltransferase (527 aa).

The hemK stretch occupies residues 1–309; it reads MQYSIKQVLS…GHSRVILFSP (309 aa). The segment at 1 to 311 is RF MTase; it reads MQYSIKQVLS…SRVILFSPIN (311 aa). S-adenosyl-L-methionine is bound by residues 149 to 153, aspartate 172, tryptophan 201, asparagine 216, glutamate 356, glutamate 381, asparagine 408, and aspartate 430; that span reads GTGSG. Substrate is bound at residue 216-219; the sequence is NPPY. The tRNA (guanine-N(7)-)-methyltransferase stretch occupies residues 310-527; that stretch reads INLNRSYARR…IILQHVSGDH (218 aa). The tract at residues 314-527 is tRNA MTase; that stretch reads RSYARRIGKS…IILQHVSGDH (214 aa). Residue aspartate 430 is part of the active site. Substrate is bound by residues lysine 434 and aspartate 466.

The protein in the C-terminal section; belongs to the class I-like SAM-binding methyltransferase superfamily. TrmB family. In the N-terminal section; belongs to the protein N5-glutamine methyltransferase family. PrmC subfamily.

It carries out the reaction L-glutaminyl-[peptide chain release factor] + S-adenosyl-L-methionine = N(5)-methyl-L-glutaminyl-[peptide chain release factor] + S-adenosyl-L-homocysteine + H(+). It catalyses the reaction guanosine(46) in tRNA + S-adenosyl-L-methionine = N(7)-methylguanosine(46) in tRNA + S-adenosyl-L-homocysteine. Its function is as follows. Methylates the class 1 translation termination release factors RF1/PrfA and RF2/PrfB on the glutamine residue of the universally conserved GGQ motif. Functionally, catalyzes the formation of N(7)-methylguanine at position 46 (m7G46) in tRNA. The protein is Bifunctional methyltransferase (prmC/trmB) of Rickettsia felis (strain ATCC VR-1525 / URRWXCal2) (Rickettsia azadi).